Reading from the N-terminus, the 34-residue chain is Protein MgtT (34 aa).

The disordered stretch occupies residues 1–34 (MNGDNPSPNRPLVTVVYKGPDFYDGEKKPPVNRR). Residues 24-34 (DGEKKPPVNRR) are compositionally biased toward basic and acidic residues.

The protein is Protein MgtT of Escherichia coli (strain K12).